Reading from the N-terminus, the 287-residue chain is 4-diphosphocytidyl-2-C-methyl-D-erythritol kinase (287 aa).

The active site involves Lys-11. 93–103 (PFGAGLGGGSS) provides a ligand contact to ATP. Asp-135 is a catalytic residue.

The protein belongs to the GHMP kinase family. IspE subfamily.

It catalyses the reaction 4-CDP-2-C-methyl-D-erythritol + ATP = 4-CDP-2-C-methyl-D-erythritol 2-phosphate + ADP + H(+). It functions in the pathway isoprenoid biosynthesis; isopentenyl diphosphate biosynthesis via DXP pathway; isopentenyl diphosphate from 1-deoxy-D-xylulose 5-phosphate: step 3/6. Functionally, catalyzes the phosphorylation of the position 2 hydroxy group of 4-diphosphocytidyl-2C-methyl-D-erythritol. The chain is 4-diphosphocytidyl-2-C-methyl-D-erythritol kinase from Chlorobium luteolum (strain DSM 273 / BCRC 81028 / 2530) (Pelodictyon luteolum).